We begin with the raw amino-acid sequence, 453 residues long: Glutamyl-tRNA(Gln) amidotransferase subunit A (453 aa).

Catalysis depends on charge relay system residues Lys-56 and Ser-131. Residue Ser-155 is the Acyl-ester intermediate of the active site.

The protein belongs to the amidase family. GatA subfamily. In terms of assembly, heterotrimer of A, B and C subunits.

It carries out the reaction L-glutamyl-tRNA(Gln) + L-glutamine + ATP + H2O = L-glutaminyl-tRNA(Gln) + L-glutamate + ADP + phosphate + H(+). Allows the formation of correctly charged Gln-tRNA(Gln) through the transamidation of misacylated Glu-tRNA(Gln) in organisms which lack glutaminyl-tRNA synthetase. The reaction takes place in the presence of glutamine and ATP through an activated gamma-phospho-Glu-tRNA(Gln). This is Glutamyl-tRNA(Gln) amidotransferase subunit A from Campylobacter jejuni subsp. doylei (strain ATCC BAA-1458 / RM4099 / 269.97).